A 524-amino-acid polypeptide reads, in one-letter code: 2-isopropylmalate synthase (524 aa).

One can recognise a Pyruvate carboxyltransferase domain in the interval 12–274 (VIIFDTTLRD…WNRIETTMLT (263 aa)). Mn(2+) contacts are provided by Asp-21, His-209, His-211, and Asn-245. The tract at residues 398–524 (KLMSLTVIAG…EDAPTVAVAG (127 aa)) is regulatory domain.

It belongs to the alpha-IPM synthase/homocitrate synthase family. LeuA type 1 subfamily. Homodimer. Mn(2+) serves as cofactor.

It is found in the cytoplasm. The enzyme catalyses 3-methyl-2-oxobutanoate + acetyl-CoA + H2O = (2S)-2-isopropylmalate + CoA + H(+). Its pathway is amino-acid biosynthesis; L-leucine biosynthesis; L-leucine from 3-methyl-2-oxobutanoate: step 1/4. In terms of biological role, catalyzes the condensation of the acetyl group of acetyl-CoA with 3-methyl-2-oxobutanoate (2-ketoisovalerate) to form 3-carboxy-3-hydroxy-4-methylpentanoate (2-isopropylmalate). The polypeptide is 2-isopropylmalate synthase (Rhodopseudomonas palustris (strain TIE-1)).